The following is a 174-amino-acid chain: Type II secretion system protein M (174 aa).

Over Met1 to Arg32 the chain is Cytoplasmic. The chain crosses the membrane as a helical span at residues Leu33 to Trp52. Residues Arg53 to Glu174 are Periplasmic-facing.

The protein belongs to the GSP M family. Type II secretion system is composed of four main components: the outer membrane complex, the inner membrane complex, the cytoplasmic secretion ATPase and the periplasm-spanning pseudopilus. Forms homodimers. Interacts with XcpY/GspL. Interacts with XcpR/GspE and XcpS/GspF.

It is found in the cell inner membrane. Functionally, inner membrane component of the type II secretion system required for the energy-dependent secretion of extracellular factors such as proteases and toxins from the periplasm. Plays a role in the complex assembly and recruits XcpY resulting in a stable complex in the inner membrane. Provides thus a link between the energy-providing XcpR protein in the cytoplasm and the rest of the T2SS machinery. In Pseudomonas aeruginosa (strain ATCC 15692 / DSM 22644 / CIP 104116 / JCM 14847 / LMG 12228 / 1C / PRS 101 / PAO1), this protein is Type II secretion system protein M (xcpZ).